The sequence spans 132 residues: Fatty acid-binding protein, intestinal (132 aa).

Ala2 carries the N-acetylalanine modification. Hexadecanoate is bound by residues Trp83 and Arg107. Positions 83 and 107 each coordinate tetradecanoate.

It belongs to the calycin superfamily. Fatty-acid binding protein (FABP) family.

The protein resides in the cytoplasm. Its function is as follows. FABPs are thought to play a role in the intracellular transport of long-chain fatty acids and their acyl-CoA esters. FABP2 is probably involved in triglyceride-rich lipoprotein synthesis. Binds saturated long-chain fatty acids with a high affinity, but binds with a lower affinity to unsaturated long-chain fatty acids. FABP2 may also help maintain energy homeostasis by functioning as a lipid sensor. This chain is Fatty acid-binding protein, intestinal (FABP2), found in Bos taurus (Bovine).